The chain runs to 185 residues: Large ribosomal subunit protein bL25 (185 aa).

Belongs to the bacterial ribosomal protein bL25 family. CTC subfamily. In terms of assembly, part of the 50S ribosomal subunit; part of the 5S rRNA/L5/L18/L25 subcomplex. Contacts the 5S rRNA. Binds to the 5S rRNA independently of L5 and L18.

Its function is as follows. This is one of the proteins that binds to the 5S RNA in the ribosome where it forms part of the central protuberance. This chain is Large ribosomal subunit protein bL25, found in Chlamydia trachomatis serovar A (strain ATCC VR-571B / DSM 19440 / HAR-13).